Consider the following 238-residue polypeptide: tRNA (guanine-N(7)-)-methyltransferase (238 aa).

The S-adenosyl-L-methionine site is built by Glu-68, Glu-93, Asp-121, and Asp-143. Residue Asp-143 is part of the active site. Substrate contacts are provided by residues Lys-147, Asp-179, and 216-219; that span reads TRYE.

Belongs to the class I-like SAM-binding methyltransferase superfamily. TrmB family.

It catalyses the reaction guanosine(46) in tRNA + S-adenosyl-L-methionine = N(7)-methylguanosine(46) in tRNA + S-adenosyl-L-homocysteine. Its pathway is tRNA modification; N(7)-methylguanine-tRNA biosynthesis. Functionally, catalyzes the formation of N(7)-methylguanine at position 46 (m7G46) in tRNA. The chain is tRNA (guanine-N(7)-)-methyltransferase from Paramagnetospirillum magneticum (strain ATCC 700264 / AMB-1) (Magnetospirillum magneticum).